The primary structure comprises 769 residues: DNA mismatch repair protein MLH1 (769 aa).

Residues 1–335 (MSLRIKALDA…IANQLHAELS (335 aa)) form a DNA- and ATP-binding region. The segment covering 422 to 441 (EGSSTKRQLSEPKVTNVSHS) has biased composition (polar residues). Residues 422–480 (EGSSTKRQLSEPKVTNVSHSQEAEKLTLNESEQPRDANTINDNDLKDQPKKKQKLGDYK) are disordered. Residue serine 441 is modified to Phosphoserine; by ATM or ATR. 2 stretches are compositionally biased toward basic and acidic residues: residues 442 to 456 (QEAEKLTLNESEQPR) and 464 to 478 (NDLKDQPKKKQKLGD). Residues 501 to 756 (RVPKERVNVN…RHILKDVVEI (256 aa)) are interaction with PMS1.

Belongs to the DNA mismatch repair MutL/HexB family. Heterodimer of MLH1 and PMS1, called MutLalpha, which is the major MMR MutL activity correcting base-base mismatches as well as IDLs. The heterodimer binds double strand DNA independently of a mismatch with positive cooperativity and has more than one DNA binding site. Forms a ternary complex with either the MSH2-MSH6 (MutSalpha) or the MSH2-MSH3 heterodimer (MutSbeta), which recognize and bind to mismatch DNA. Ternary complex formation is promoted by ATP binding. Heterodimer of MLH1 and MLH3, called MutLbeta, which is involved in correction of a specific subset of IDLs when associated with MutSbeta. Heterodimer of MLH1 and MLH2.

The protein resides in the nucleus. Its function is as follows. Required for DNA mismatch repair (MMR), correcting base-base mismatches and insertion-deletion loops (IDLs) resulting from DNA replication, DNA damage or from recombination events between non-identical sequences during meiosis. Component of different MutL heterodimers that form a ternary complex with the MutS heterodimers, which initially recognize the DNA mismatches. This complex is thought to be responsible for directing the downstream MMR events, including strand discrimination, excision, and resynthesis. Plays a major role in maintaining the genetic stability of simple sequence repeats, the repair of heteroduplex sites present in meiotic recombination intermediates, and the promotion of meiotic crossing-over. The polypeptide is DNA mismatch repair protein MLH1 (MLH1) (Saccharomyces cerevisiae (strain ATCC 204508 / S288c) (Baker's yeast)).